A 603-amino-acid polypeptide reads, in one-letter code: Beta-glucuronidase (603 aa).

The D-glucuronate site is built by Asp163 and Asn412. The active-site Proton donor is Glu413. D-glucuronate contacts are provided by Asn466, Tyr472, Glu504, Trp549, and Lys568. Glu504 serves as the catalytic Nucleophile. Positions 566–568 (NKK) match the N-K motif motif.

The protein belongs to the glycosyl hydrolase 2 family. In terms of assembly, homotetramer.

It carries out the reaction a beta-D-glucuronoside + H2O = D-glucuronate + an alcohol. The enzyme catalyses 4-methylumbelliferone beta-D-glucuronate + H2O = 4-methylumbelliferone + D-glucuronate. Its activity is regulated as follows. Potently inhibited by a set of synthetic compounds like thio-urea derivatives and analogs, and uronic isofagomine (UIFG) derivatives. Inhibitors of gut microbial beta-glucuronidases block the reactivation of glucuronidated cancer drugs, and thereby alleviate drug-induced GI toxicity. In terms of biological role, displays beta-glucuronidase activity with the artificial substrate p-nitrophenyl-beta-D-glucuronide (PNPG) and with 4-methylumbelliferyl-glucuronide. Is likely capable of scavenging glucuronate from a range of chemically distinct xenobiotic and endobiotic glucuronides present in the gastrointestinal (GI) tract, to be able to utilize these diverse sources of carbon. As part of the GI microbiome, this enzyme is able to reactivate glucuronide drug conjugates, such reactivated compounds can significantly damage the GI tract. This chain is Beta-glucuronidase (uidA), found in Escherichia coli (strain K12).